The chain runs to 322 residues: Extracellular metalloprotease AFUB_008060 (322 aa).

Positions 1–22 (MLPFNSCVYVLLIISLMSNCRA) are cleaved as a signal peptide. Residues Asn123 and Asn197 are each glycosylated (N-linked (GlcNAc...) asparagine). His233 lines the Zn(2+) pocket. Glu234 is an active-site residue. Zn(2+) is bound at residue His237. An intrachain disulfide couples Cys272 to Cys299.

Belongs to the peptidase M43B family.

It localises to the secreted. In terms of biological role, secreted metalloproteinase that allows assimilation of proteinaceous substrates. Plays a pivotal role as a pathogenicity determinant during infections and contributes to the ability of the pathogen to persist within the mammalian host. The sequence is that of Extracellular metalloprotease AFUB_008060 from Aspergillus fumigatus (strain CBS 144.89 / FGSC A1163 / CEA10) (Neosartorya fumigata).